The sequence spans 133 residues: UPF0134 protein MPN_151 (133 aa).

It belongs to the UPF0134 family.

The sequence is that of UPF0134 protein MPN_151 from Mycoplasma pneumoniae (strain ATCC 29342 / M129 / Subtype 1) (Mycoplasmoides pneumoniae).